Consider the following 175-residue polypeptide: Ribosome-binding factor A (175 aa).

The disordered stretch occupies residues 131 to 175 (KPAGEADPYRDRGSVDEPSDAGGLVIRTSDGLEAENTGDDYQAED). Residues 162–175 (LEAENTGDDYQAED) show a composition bias toward acidic residues.

This sequence belongs to the RbfA family. Monomer. Binds 30S ribosomal subunits, but not 50S ribosomal subunits or 70S ribosomes.

It localises to the cytoplasm. Functionally, one of several proteins that assist in the late maturation steps of the functional core of the 30S ribosomal subunit. Associates with free 30S ribosomal subunits (but not with 30S subunits that are part of 70S ribosomes or polysomes). Required for efficient processing of 16S rRNA. May interact with the 5'-terminal helix region of 16S rRNA. This chain is Ribosome-binding factor A, found in Mycobacterium ulcerans (strain Agy99).